A 249-amino-acid polypeptide reads, in one-letter code: CDP-diacylglycerol pyrophosphatase (249 aa).

A helical transmembrane segment spans residues 7–27; it reads FLLAVVIVAAVAGIGYWKLAA.

The protein belongs to the Cdh family.

It is found in the cell inner membrane. The enzyme catalyses a CDP-1,2-diacyl-sn-glycerol + H2O = a 1,2-diacyl-sn-glycero-3-phosphate + CMP + 2 H(+). It participates in phospholipid metabolism; CDP-diacylglycerol degradation; phosphatidate from CDP-diacylglycerol: step 1/1. The polypeptide is CDP-diacylglycerol pyrophosphatase (Citrobacter koseri (strain ATCC BAA-895 / CDC 4225-83 / SGSC4696)).